The chain runs to 612 residues: MAERSGYRQLQLLQDASLWREYCEARSESSIYLSNLQTHADAVLSRYRDYLGHEFEQVWIDCHDGLHADAIAALCGTVTAGGLLSILLPAESNAMSHRMERFAAKHFAESNIKPYSSVNKTETRSANETLQLTNEQNSIFNALTQSTAKPYETHIITAERGRGKSTLLGQALAQAKEHRSIIVTAPRKANAKVLLQQAPEAHFVAWDKLLEQPGNSEVTLIIDEAAGLPLWATEQLCQKFNPWLLATTVAGYEGCGRGFAVHFTDWARKTLPQVSVHQLTQPLRWPANDPLEQWLTETFLLNEQPVTQFGNRESGTFIKHASELEEALLQQCFQLLLSAHYQSSPNDLNLLLTEPGHKLAYQSTNGEVTAVAWLMSEGPILSPLKEEVRQGQRRPKGNLLPQAIGYFLQQDWAMDLHWLRVARIAVPAAKRRRKAASELLAEIYRWALDNNYQMLGTSFAWSPGLDNFWKKNGYALWRLSSRIDSVSARPAAIYALPLTNEFTELYRVCQLLGQWGQNQLQWLSGGKETLQLTEERNKIRTSLIQAYRSKTIPFDAAHFALAQWFYWQHSNHPLTELLCNSSTTLKHLGEYWGGVSQRQANENLCKEVCLLH.

Residues Q136, G161–Q170, and R284 each bind ATP. An N-acetyltransferase domain is found at K319–T499. I424–V426 contributes to the acetyl-CoA binding site.

The protein belongs to the RNA cytidine acetyltransferase family. TmcA subfamily.

Its subcellular location is the cytoplasm. The enzyme catalyses cytidine(34) in elongator tRNA(Met) + acetyl-CoA + ATP + H2O = N(4)-acetylcytidine(34) in elongator tRNA(Met) + ADP + phosphate + CoA + H(+). In terms of biological role, catalyzes the formation of N(4)-acetylcytidine (ac(4)C) at the wobble position of tRNA(Met), by using acetyl-CoA as an acetyl donor and ATP (or GTP). This is tRNA(Met) cytidine acetyltransferase TmcA from Idiomarina loihiensis (strain ATCC BAA-735 / DSM 15497 / L2-TR).